Here is a 335-residue protein sequence, read N- to C-terminus: Protein BIG1 (335 aa).

The N-terminal stretch at 1–17 (MQTVLKYLLLIMCGSFC) is a signal peptide. Residues 20-275 (EELQNQTNVP…FDSQLIENNR (256 aa)) are Lumenal-facing. N-linked (GlcNAc...) asparagine glycosylation is found at N24 and N144. Residues 276-296 (GLLQLIFTILVGYILIQFFFT) form a helical membrane-spanning segment. At 297 to 335 (KKTIVDEKITNKKDNVKQTSPQLLKKVQEIQKKPSQQVS) the chain is on the cytoplasmic side.

This sequence belongs to the BIG1 family. N-glycosylated.

It localises to the endoplasmic reticulum membrane. In terms of biological role, required for normal beta-1,6-glucan synthesis. The chain is Protein BIG1 (BIG1) from Saccharomyces cerevisiae (strain ATCC 204508 / S288c) (Baker's yeast).